The sequence spans 266 residues: uncharacterized protein (266 aa).

This is an uncharacterized protein from Acanthamoeba polyphaga (Amoeba).